We begin with the raw amino-acid sequence, 274 residues long: Eukaryotic translation initiation factor 3 subunit G (274 aa).

Phosphoserine is present on residues Ser-146, Ser-164, and Ser-171. The tract at residues 149-170 is disordered; that stretch reads ANTSAAATPEPDTDASGKYVPP. In terms of domain architecture, RRM spans 191-270; that stretch reads TTLKISQLNT…LILHLEWPKK (80 aa).

It belongs to the eIF-3 subunit G family. Component of the eukaryotic translation initiation factor 3 (eIF-3) complex.

The protein resides in the cytoplasm. Its function is as follows. RNA-binding component of the eukaryotic translation initiation factor 3 (eIF-3) complex, which is involved in protein synthesis of a specialized repertoire of mRNAs and, together with other initiation factors, stimulates binding of mRNA and methionyl-tRNAi to the 40S ribosome. The eIF-3 complex specifically targets and initiates translation of a subset of mRNAs involved in cell proliferation. This subunit can bind 18S rRNA. This Meyerozyma guilliermondii (strain ATCC 6260 / CBS 566 / DSM 6381 / JCM 1539 / NBRC 10279 / NRRL Y-324) (Yeast) protein is Eukaryotic translation initiation factor 3 subunit G.